The primary structure comprises 409 residues: N-acetylglucosamine-6-phosphate deacetylase (409 aa).

Residue glutamate 143 participates in a divalent metal cation binding. 154–155 contributes to the substrate binding site; sequence AH. A divalent metal cation contacts are provided by histidine 211 and histidine 232. Substrate contacts are provided by residues 235-236, arginine 243, and 269-272; these read NA and DGIH. The active-site Proton donor/acceptor is the aspartate 294. Substrate is bound at residue 328–330; it reads LSG.

This sequence belongs to the metallo-dependent hydrolases superfamily. NagA family. Requires a divalent metal cation as cofactor.

The enzyme catalyses N-acetyl-D-glucosamine 6-phosphate + H2O = D-glucosamine 6-phosphate + acetate. It participates in amino-sugar metabolism; N-acetylneuraminate degradation. Functionally, hydrolyzes the N-glycolyl group from N-glycolylglucosamine 6-phosphate (GlcNGc-6-P) in the N-glycolylneuraminic acid (Neu5Gc) degradation pathway. This Bos taurus (Bovine) protein is N-acetylglucosamine-6-phosphate deacetylase (AMDHD2).